The primary structure comprises 59 residues: uncharacterized protein (59 aa).

A helical membrane pass occupies residues 6–26; sequence WWLVVFAVFVFLFDTLLMQWI.

The protein localises to the membrane. This is an uncharacterized protein from Escherichia coli O157:H7.